The chain runs to 484 residues: MQVRWAPSDGSLGDYTYQQDMSSSDKLSADDVLNTLDKSNRHILTCILVCGLAWSPLAFTGLCPSFVVKASENSSFIGVADEFDLTGDASWLAESTTTFYMVGNMIGGMFIPPLADHYGRLPVFVATVLLMAVGGMISAFSTSIMMFCIMRMIHGIFYTAAGLAGWVLGYENTPLRLRFFTSVYFGVMWVVGACFLGLLAYILPDWRYLMFCISVPNIFVALLIYMTVPESLHFLVSSQQNEKIEAWLEKIRGPKGDISASDIVEDRDENGSSFKTLCREMWKHKMFIVYVLVMTYIWIVDTFIYFGLAFYSTNLAGNLYLNFVLMSLVEAPAYIFSPIFMNKYGRKVLISGTHIIAGLSFLGIVLSSEAWHIHFWLLGKFAISCSFMSIYMFASEIFPTDGRNKCIGFCETLSRFGGMLSPYLSHLTAVHALAPAITLSLIAVSGGLLTLILPETLNTKLPSTIAETASRRQLIDDKSDSSSN.

The next 11 helical transmembrane spans lie at 43 to 63 (ILTCILVCGLAWSPLAFTGLC), 95 to 115 (STTTFYMVGNMIGGMFIPPLA), 121 to 141 (LPVFVATVLLMAVGGMISAFS), 144 to 164 (IMMFCIMRMIHGIFYTAAGLA), 183 to 203 (VYFGVMWVVGACFLGLLAYIL), 208 to 228 (YLMFCISVPNIFVALLIYMTV), 286 to 306 (MFIVYVLVMTYIWIVDTFIYF), 321 to 341 (LNFVLMSLVEAPAYIFSPIFM), 348 to 368 (VLISGTHIIAGLSFLGIVLSS), 373 to 393 (IHFWLLGKFAISCSFMSIYMF), and 433 to 453 (LAPAITLSLIAVSGGLLTLIL).

The protein belongs to the major facilitator superfamily. Sugar transporter (TC 2.A.1.1) family.

Its subcellular location is the membrane. The chain is Putative transporter B0252.3 from Caenorhabditis elegans.